Consider the following 269-residue polypeptide: GTP cyclohydrolase FolE2 1 (269 aa).

This sequence belongs to the GTP cyclohydrolase IV family.

It catalyses the reaction GTP + H2O = 7,8-dihydroneopterin 3'-triphosphate + formate + H(+). It functions in the pathway cofactor biosynthesis; 7,8-dihydroneopterin triphosphate biosynthesis; 7,8-dihydroneopterin triphosphate from GTP: step 1/1. Its function is as follows. Converts GTP to 7,8-dihydroneopterin triphosphate. This Burkholderia cenocepacia (strain HI2424) protein is GTP cyclohydrolase FolE2 1.